Consider the following 277-residue polypeptide: Collectin-10 (277 aa).

Residues 1-27 (MNGFASLLRRNQFILLVLFLLQIQSLG) form the signal peptide. The segment at 40–107 (ATHTISPGPK…GDKGEKGLLG (68 aa)) is disordered. Over residues 49–64 (KGDDGEKGDPGEEGKH) the composition is skewed to basic and acidic residues. Residues 53-112 (GEKGDPGEEGKHGKVGRMGPKGIKGELGDMGDQGNIGKTGPIGKKGDKGEKGLLGIPGEK) form the Collagen-like domain. The C-type lectin domain occupies 155–271 (TEEKFYYIVQ…CHLTMYFVCE (117 aa)). Intrachain disulfides connect C176–C270 and C248–C262. The N-linked (GlcNAc...) asparagine glycan is linked to N258.

It belongs to the COLEC10/COLEC11 family. In terms of tissue distribution, highly expressed in liver, placenta and adrenal gland. Moderately expressed in small intestine, lung, stomach and prostate. Weakly expressed in trachea and spleen.

It is found in the secreted. It localises to the golgi apparatus. The protein localises to the cytoplasm. Its function is as follows. Lectin that binds to various sugars: galactose &gt; mannose = fucose &gt; N-acetylglucosamine &gt; N-acetylgalactosamine. Acts as a chemoattractant, probably involved in the regulation of cell migration. The chain is Collectin-10 (COLEC10) from Homo sapiens (Human).